Reading from the N-terminus, the 500-residue chain is Probable cytosol aminopeptidase (500 aa).

Mn(2+) contacts are provided by Lys-265 and Asp-270. Residue Lys-277 is part of the active site. Mn(2+)-binding residues include Asp-288, Asp-347, and Glu-349. The active site involves Arg-351.

It belongs to the peptidase M17 family. It depends on Mn(2+) as a cofactor.

Its subcellular location is the cytoplasm. It catalyses the reaction Release of an N-terminal amino acid, Xaa-|-Yaa-, in which Xaa is preferably Leu, but may be other amino acids including Pro although not Arg or Lys, and Yaa may be Pro. Amino acid amides and methyl esters are also readily hydrolyzed, but rates on arylamides are exceedingly low.. The enzyme catalyses Release of an N-terminal amino acid, preferentially leucine, but not glutamic or aspartic acids.. Functionally, presumably involved in the processing and regular turnover of intracellular proteins. Catalyzes the removal of unsubstituted N-terminal amino acids from various peptides. The polypeptide is Probable cytosol aminopeptidase (Rickettsia felis (strain ATCC VR-1525 / URRWXCal2) (Rickettsia azadi)).